Consider the following 422-residue polypeptide: Glucose-1-phosphate adenylyltransferase 2 (422 aa).

Alpha-D-glucose 1-phosphate contacts are provided by residues Y110, G175, 190–191, and S208; that span reads EK.

It belongs to the bacterial/plant glucose-1-phosphate adenylyltransferase family. In terms of assembly, homotetramer.

The catalysed reaction is alpha-D-glucose 1-phosphate + ATP + H(+) = ADP-alpha-D-glucose + diphosphate. It participates in glycan biosynthesis; glycogen biosynthesis. Involved in the biosynthesis of ADP-glucose, a building block required for the elongation reactions to produce glycogen. Catalyzes the reaction between ATP and alpha-D-glucose 1-phosphate (G1P) to produce pyrophosphate and ADP-Glc. The chain is Glucose-1-phosphate adenylyltransferase 2 from Alkalilimnicola ehrlichii (strain ATCC BAA-1101 / DSM 17681 / MLHE-1).